We begin with the raw amino-acid sequence, 67 residues long: DNA gyrase inhibitor YacG (67 aa).

Cys-9, Cys-12, Cys-28, and Cys-32 together coordinate Zn(2+). The disordered stretch occupies residues 48-67 (PVSPDAEDELFSEELPPRAH).

The protein belongs to the DNA gyrase inhibitor YacG family. In terms of assembly, interacts with GyrB. Requires Zn(2+) as cofactor.

In terms of biological role, inhibits all the catalytic activities of DNA gyrase by preventing its interaction with DNA. Acts by binding directly to the C-terminal domain of GyrB, which probably disrupts DNA binding by the gyrase. The polypeptide is DNA gyrase inhibitor YacG (Pseudomonas fluorescens (strain ATCC BAA-477 / NRRL B-23932 / Pf-5)).